A 370-amino-acid chain; its full sequence is Protein Brevis radix-like 3 (370 aa).

One can recognise a BRX 1 domain in the interval 140–221; that stretch reads KEWVAQVEPG…NFEKVMELYN (82 aa). 2 stretches are compositionally biased toward polar residues: residues 231–248 and 266–291; these read LQTPPVSEDGGSQIQSVK and PGSSGFASTPKLSSISGTKTETSSID. The segment at 231–316 is disordered; it reads LQTPPVSEDG…VSNASDMESE (86 aa). Residues 315 to 370 form the BRX 2 domain; the sequence is SEWVEQDEPGIYITIRALPDGNRELRRVRFSRDKFGETHARLWWEQNRARIQQQYL.

This sequence belongs to the BRX family. As to expression, expressed in roots.

It is found in the nucleus. The polypeptide is Protein Brevis radix-like 3 (BRXL3) (Arabidopsis thaliana (Mouse-ear cress)).